The following is a 678-amino-acid chain: Glycine--tRNA ligase beta subunit (678 aa).

This sequence belongs to the class-II aminoacyl-tRNA synthetase family. Tetramer of two alpha and two beta subunits.

The protein localises to the cytoplasm. The catalysed reaction is tRNA(Gly) + glycine + ATP = glycyl-tRNA(Gly) + AMP + diphosphate. The sequence is that of Glycine--tRNA ligase beta subunit from Streptococcus pneumoniae (strain P1031).